A 51-amino-acid polypeptide reads, in one-letter code: Insulin (51 aa).

3 cysteine pairs are disulfide-bonded: Cys-7–Cys-36, Cys-19–Cys-49, and Cys-35–Cys-40.

This sequence belongs to the insulin family. As to quaternary structure, heterodimer of a B chain and an A chain linked by two disulfide bonds.

It is found in the secreted. In terms of biological role, insulin decreases blood glucose concentration. It increases cell permeability to monosaccharides, amino acids and fatty acids. It accelerates glycolysis, the pentose phosphate cycle, and glycogen synthesis in liver. The sequence is that of Insulin (INS) from Myocastor coypus (Coypu).